The following is a 595-amino-acid chain: DNA polymerase (595 aa).

One can recognise a 3'-5' exonuclease domain in the interval 1–212; sequence MIELRHEVQG…CKSLTPLVPD (212 aa). A polymerase region spans residues 213–595; it reads VSRSLVPYEH…SWGSLYGADY (383 aa).

This sequence belongs to the DNA polymerase type-A family.

The catalysed reaction is DNA(n) + a 2'-deoxyribonucleoside 5'-triphosphate = DNA(n+1) + diphosphate. Functionally, replicates viral genomic DNA. This polymerase possesses two enzymatic activities: DNA synthesis (polymerase) and an exonucleolytic activity that degrades single-stranded DNA in the 3'-5' direction. This chain is DNA polymerase (44), found in Mycobacterium phage L5 (Mycobacteriophage L5).